A 624-amino-acid chain; its full sequence is ADP,ATP carrier protein 1, chloroplastic (624 aa).

The transit peptide at 1–79 directs the protein to the chloroplast; that stretch reads MEAVIQTRGL…KERSTEFICK (79 aa). A80 bears the N-acetylalanine mark. Helical transmembrane passes span 108-128, 182-202, 240-260, 315-335, 446-466, and 545-565; these read VEVA…CILF, ALFY…GFVM, LFYV…FWGF, AMMS…WWVN, LLTG…APLV, and LANS…AWLA. Residues 579-624 form a disordered region; it reads SEEELEKEMERASSVKIPVVSQDESGNGSLGESPSSSPEKSAPTNL. Positions 602-624 are enriched in low complexity; it reads ESGNGSLGESPSSSPEKSAPTNL.

Belongs to the ADP/ATP translocase tlc (TC 2.A.12.2) family.

It localises to the plastid. It is found in the chloroplast membrane. Its function is as follows. May function as an ATP importer. The polypeptide is ADP,ATP carrier protein 1, chloroplastic (AATP1) (Arabidopsis thaliana (Mouse-ear cress)).